The following is a 358-amino-acid chain: Protein FAM187B (358 aa).

The N-terminal stretch at 1–17 (MLATLWLVGLSLPMLWA) is a signal peptide. At 18 to 322 (QRLISCPYKN…DKADSVLRRL (305 aa)) the chain is on the extracellular side. The N-linked (GlcNAc...) asparagine glycan is linked to asparagine 127. A helical transmembrane segment spans residues 323-343 (KLMVLSISVLAVGGLLCKVVF). The Cytoplasmic segment spans residues 344–358 (RPVCGKKRSQVLLVK).

Belongs to the FAM187 family.

It is found in the membrane. The chain is Protein FAM187B (Fam187b) from Mus musculus (Mouse).